The primary structure comprises 401 residues: Argininosuccinate synthase (401 aa).

Residue 9–17 (AYSGGLDTS) coordinates ATP. Y86 is an L-citrulline binding site. G116 is a binding site for ATP. Residues T118, N122, and D123 each coordinate L-aspartate. Residue N122 participates in L-citrulline binding. R126, S174, S183, E259, and Y271 together coordinate L-citrulline.

The protein belongs to the argininosuccinate synthase family. Type 1 subfamily. Homotetramer.

Its subcellular location is the cytoplasm. The catalysed reaction is L-citrulline + L-aspartate + ATP = 2-(N(omega)-L-arginino)succinate + AMP + diphosphate + H(+). Its pathway is amino-acid biosynthesis; L-arginine biosynthesis; L-arginine from L-ornithine and carbamoyl phosphate: step 2/3. The chain is Argininosuccinate synthase from Bacillus cereus (strain Q1).